Here is a 281-residue protein sequence, read N- to C-terminus: MTARALHYVFKVANRAKTIDFFTNVLNMKVLRHEEFEKGCEATCNGPYNGRWSKTMIGYGSEDEHFVLEITYNYPIHKYELGNDYRAIVIDSDQLFEKVEKINHRKSGCGRLAVKDPDGHEFKIGKADQSPKVLRVQVNVGDLEKSKKYWNETLGMPIVEEKSSRIRMSYGDGQCELEIVKSQDKIDRKTGFGRIAFSYPEDKLESLQDKIKSANGTIINELTTLETPGKADVQVVILADPDEHEICFVGDEGFRALSKIDDKAESELKEQIKKDDSEKWI.

2 VOC domains span residues 4–127 (RALH…IGKA) and 132–251 (KVLR…FVGD).

This sequence belongs to the glyoxalase I family. As to expression, expressed in the following tissues in both larvae and adults: pharynx, pharyngeal-intestinal valve, intestine, anal sphincter, vulval muscle, seam cells and the nervous system.

Its function is as follows. Thought to act as a glyoxalase. May remove methylglyoxal from mitochondrial proteins. Has roles in reducing oxidative stress and increasing lifespan. The sequence is that of Glyoxalase 1 (glod-4) from Caenorhabditis elegans.